Reading from the N-terminus, the 443-residue chain is EP1-like glycoprotein 4 (443 aa).

Residues 1–22 form the signal peptide; that stretch reads MEFSTTLALFFTLSIFLVGAQA. In terms of domain architecture, Bulb-type lectin spans 29-159; that stretch reads QFRVVNEGGY…NGKFVWQSFD (131 aa). 4 N-linked (GlcNAc...) asparagine glycosylation sites follow: asparagine 66, asparagine 102, asparagine 258, and asparagine 269. A WD repeat occupies 254 to 296; that stretch reads GSQFNVSTFLSRPKHNATLSFLRLESDGNIRVWSYSTLATSTA. Residues 356–433 form the PAN domain; that stretch reads CDPKTFHYFK…TSLVAYVKAP (78 aa). 2 disulfide bridges follow: cysteine 387-cysteine 409 and cysteine 391-cysteine 397. N-linked (GlcNAc...) asparagine glycosylation occurs at asparagine 434.

It is found in the secreted. The protein localises to the cell wall. The protein is EP1-like glycoprotein 4 of Arabidopsis thaliana (Mouse-ear cress).